Consider the following 81-residue polypeptide: Photosystem I iron-sulfur center (81 aa).

2 4Fe-4S ferredoxin-type domains span residues 2 to 31 and 39 to 68; these read AHSV…MVPW and IASA…VRVY. Residues C11, C14, C17, C21, C48, C51, C54, and C58 each contribute to the [4Fe-4S] cluster site.

As to quaternary structure, the eukaryotic PSI reaction center is composed of at least 11 subunits. Requires [4Fe-4S] cluster as cofactor.

The protein localises to the plastid. The protein resides in the chloroplast thylakoid membrane. It carries out the reaction reduced [plastocyanin] + hnu + oxidized [2Fe-2S]-[ferredoxin] = oxidized [plastocyanin] + reduced [2Fe-2S]-[ferredoxin]. Apoprotein for the two 4Fe-4S centers FA and FB of photosystem I (PSI); essential for photochemical activity. FB is the terminal electron acceptor of PSI, donating electrons to ferredoxin. The C-terminus interacts with PsaA/B/D and helps assemble the protein into the PSI complex. Required for binding of PsaD and PsaE to PSI. PSI is a plastocyanin-ferredoxin oxidoreductase, converting photonic excitation into a charge separation, which transfers an electron from the donor P700 chlorophyll pair to the spectroscopically characterized acceptors A0, A1, FX, FA and FB in turn. This chain is Photosystem I iron-sulfur center, found in Physcomitrium patens (Spreading-leaved earth moss).